Here is a 286-residue protein sequence, read N- to C-terminus: 4-hydroxybenzoate octaprenyltransferase (286 aa).

Transmembrane regions (helical) follow at residues 21–40 (GTLL…AGGM), 95–115 (ILFV…NGLV), 142–162 (FLGV…TGEV), 167–187 (WWLF…YAMV), 211–231 (IIGL…WSAE), 235–255 (LYGL…MLIF), and 266–286 (FLNN…DYLI).

This sequence belongs to the UbiA prenyltransferase family. Mg(2+) serves as cofactor.

The protein localises to the cell inner membrane. The catalysed reaction is all-trans-octaprenyl diphosphate + 4-hydroxybenzoate = 4-hydroxy-3-(all-trans-octaprenyl)benzoate + diphosphate. Its pathway is cofactor biosynthesis; ubiquinone biosynthesis. Its function is as follows. Catalyzes the prenylation of para-hydroxybenzoate (PHB) with an all-trans polyprenyl group. Mediates the second step in the final reaction sequence of ubiquinone-8 (UQ-8) biosynthesis, which is the condensation of the polyisoprenoid side chain with PHB, generating the first membrane-bound Q intermediate 3-octaprenyl-4-hydroxybenzoate. This chain is 4-hydroxybenzoate octaprenyltransferase, found in Shewanella putrefaciens (strain CN-32 / ATCC BAA-453).